A 370-amino-acid chain; its full sequence is MTASPKQRVVVGLSGGVDSAVTAYLLRQQGHEVVGIFMKNWEDDDDGGYCPSGTDFVDAAAVADVIGIEIEHVNFAADYKERVFAEFLREYQAGRTPNPDVLCNAEIKFKAFLDHALRLGAEKIATGHYAGVRRNPASGRFELLKGADPAKDQSYFLHRLDQRQLSRTLFPLGALRKTEVRRLAEDIGLPNARKKDSTGICFIGERPFREFLNRYIGPAPGPIEDDRGRVLGQHSGLSFYTLGQRQGLGIGGLKEQGAQRGGGAHAPWFVARKELATNTLRVVQGHDHPWLLSRALEAQDARWICGAAPAPGRYAAKTRYRQQDASCTMASAGQAGFRLHFSEEQWAVTPGQSAVLYDGNVCLGGGVIAG.

Residues 12 to 19 (GLSGGVDS) and methionine 38 each bind ATP. Residues 98 to 100 (NPD) form an interaction with target base in tRNA region. Cysteine 103 serves as the catalytic Nucleophile. Cysteine 103 and cysteine 201 are oxidised to a cystine. ATP is bound at residue glycine 127. Residues 151-153 (KDQ) form an interaction with tRNA region. The active-site Cysteine persulfide intermediate is cysteine 201. Positions 319-320 (RY) are interaction with tRNA.

This sequence belongs to the MnmA/TRMU family.

The protein localises to the cytoplasm. The catalysed reaction is S-sulfanyl-L-cysteinyl-[protein] + uridine(34) in tRNA + AH2 + ATP = 2-thiouridine(34) in tRNA + L-cysteinyl-[protein] + A + AMP + diphosphate + H(+). Catalyzes the 2-thiolation of uridine at the wobble position (U34) of tRNA, leading to the formation of s(2)U34. The protein is tRNA-specific 2-thiouridylase MnmA of Verminephrobacter eiseniae (strain EF01-2).